A 244-amino-acid polypeptide reads, in one-letter code: 5-oxoprolinase subunit A (244 aa).

The protein belongs to the LamB/PxpA family. Forms a complex composed of PxpA, PxpB and PxpC.

It catalyses the reaction 5-oxo-L-proline + ATP + 2 H2O = L-glutamate + ADP + phosphate + H(+). Its function is as follows. Catalyzes the cleavage of 5-oxoproline to form L-glutamate coupled to the hydrolysis of ATP to ADP and inorganic phosphate. The polypeptide is 5-oxoprolinase subunit A (Citrobacter koseri (strain ATCC BAA-895 / CDC 4225-83 / SGSC4696)).